We begin with the raw amino-acid sequence, 242 residues long: Biosynthetic peptidoglycan transglycosylase (242 aa).

A helical membrane pass occupies residues 19 to 39; the sequence is LMVVLAVFWAGGIALFSVAPV.

This sequence belongs to the glycosyltransferase 51 family.

The protein resides in the cell inner membrane. The enzyme catalyses [GlcNAc-(1-&gt;4)-Mur2Ac(oyl-L-Ala-gamma-D-Glu-L-Lys-D-Ala-D-Ala)](n)-di-trans,octa-cis-undecaprenyl diphosphate + beta-D-GlcNAc-(1-&gt;4)-Mur2Ac(oyl-L-Ala-gamma-D-Glu-L-Lys-D-Ala-D-Ala)-di-trans,octa-cis-undecaprenyl diphosphate = [GlcNAc-(1-&gt;4)-Mur2Ac(oyl-L-Ala-gamma-D-Glu-L-Lys-D-Ala-D-Ala)](n+1)-di-trans,octa-cis-undecaprenyl diphosphate + di-trans,octa-cis-undecaprenyl diphosphate + H(+). It participates in cell wall biogenesis; peptidoglycan biosynthesis. Peptidoglycan polymerase that catalyzes glycan chain elongation from lipid-linked precursors. The protein is Biosynthetic peptidoglycan transglycosylase of Shigella boydii serotype 4 (strain Sb227).